We begin with the raw amino-acid sequence, 206 residues long: Small ribosomal subunit protein uS4 (206 aa).

One can recognise an S4 RNA-binding domain in the interval 96–158 (GRLDNVVYRM…AKQQSRIKAA (63 aa)).

Belongs to the universal ribosomal protein uS4 family. Part of the 30S ribosomal subunit. Contacts protein S5. The interaction surface between S4 and S5 is involved in control of translational fidelity.

In terms of biological role, one of the primary rRNA binding proteins, it binds directly to 16S rRNA where it nucleates assembly of the body of the 30S subunit. With S5 and S12 plays an important role in translational accuracy. The protein is Small ribosomal subunit protein uS4 of Aliivibrio fischeri (strain ATCC 700601 / ES114) (Vibrio fischeri).